The primary structure comprises 237 residues: Phosphoserine phosphatase (237 aa).

Asp-39 serves as the catalytic Nucleophile. Positions 39 and 41 each coordinate Mg(2+). The active-site Proton donor is Glu-41. Substrate is bound by residues Glu-47, Arg-78, 122-123 (SD), and Lys-165. A Mg(2+)-binding site is contributed by Asp-184. Asn-187 serves as a coordination point for substrate.

It belongs to the thrH family. The cofactor is Mg(2+).

The enzyme catalyses O-phospho-L-serine + H2O = L-serine + phosphate. It catalyses the reaction O-phospho-D-serine + H2O = D-serine + phosphate. The protein operates within amino-acid biosynthesis; L-serine biosynthesis; L-serine from 3-phospho-D-glycerate: step 3/3. In terms of biological role, phosphoserine phosphatase that mediates dephosphorylation of phosphoserine in the serine biosynthesis pathway. Also able to dephosphorylate phospho-threonine. This chain is Phosphoserine phosphatase, found in Pseudomonas syringae pv. tomato (strain ATCC BAA-871 / DC3000).